A 98-amino-acid polypeptide reads, in one-letter code: Lipolysis-activating peptide 1-beta chain (98 aa).

The first 22 residues, 1 to 22 (MANVQVIFVAYIAVIAFSMVYG), serve as a signal peptide directing secretion. The LCN-type CS-alpha/beta domain occupies 23-91 (DDYKPFGEHN…FLKAMEKQCP (69 aa)). 3 cysteine pairs are disulfide-bonded: Cys-37/Cys-60, Cys-45/Cys-70, and Cys-49/Cys-72.

Belongs to the long (3 C-C) scorpion toxin superfamily. In terms of assembly, homodimer; disulfide-linked or monomer (edited version) or heterodimer of an alpha chain (AC B8XH01) and this beta chain (non-edited version). As to expression, expressed by the venom gland.

The protein resides in the secreted. In terms of biological role, the homodimer inhibits HMG-CoA reductase (HMGCR) (32% of inhibition produced by 0.6 uM), a glycoprotein involved in the control of cholesterol biosynthesis. The inhibitory effects of bumarsin are seen at much lower concentrations (0.6 uM) than that for statins such as atorvastatin (5 mM) and simvastatin (10 uM). In addition to inhibition of HMG-CoA reductase, this protein lowers cholesterol levels by inducing steroid hormone synthesis via StAR, and by increasing reverse cholesterol transport mediated by the induction of ABCA1 and APOA1. The heterodimer non-edited LVP1 induces lipolysis in rat adipocytes. Induction of lipolysis by LVP1 appears to be mediated through the beta-2 adrenergic receptor pathway (ADRB2). Functionally, the monomer edited version, similar to alpha-toxins, may modulate voltage-gated sodium channels (Nav) and may block voltage-gated potassium channels (Kv). The chain is Lipolysis-activating peptide 1-beta chain from Buthus israelis (Israeli scorpion).